The primary structure comprises 300 residues: MTMKTHLQRLEAESIHIMREVVAQFRKPVMLYSIGKDSSVMLHLALKAFYPGKPPFPLLHVDTTWKFREMIVFRDQRVKALGLDLRVHINQEGIAQGITPFNQSASIYTDIMKTQSLKQALEQGGFDAAFGGARRDEEKSRAKERIFSFRTPNHRWDPKNQRPELWNLYNGRIAPGESIRVFPLSNWTELDIWQYIHQEQIPVVPLYFAQPRPVVVRHGALIMVDDGRMPLLPGEEPSLRSVRFRTLGCYPLTGAVESTTTDVAGIIGEMLVAHRSEREGRVIDHDGGASMEEKKQEGYF.

It belongs to the PAPS reductase family. CysD subfamily. In terms of assembly, heterodimer composed of CysD, the smaller subunit, and CysN.

It carries out the reaction sulfate + ATP + H(+) = adenosine 5'-phosphosulfate + diphosphate. It functions in the pathway sulfur metabolism; hydrogen sulfide biosynthesis; sulfite from sulfate: step 1/3. With CysN forms the ATP sulfurylase (ATPS) that catalyzes the adenylation of sulfate producing adenosine 5'-phosphosulfate (APS) and diphosphate, the first enzymatic step in sulfur assimilation pathway. APS synthesis involves the formation of a high-energy phosphoric-sulfuric acid anhydride bond driven by GTP hydrolysis by CysN coupled to ATP hydrolysis by CysD. In Magnetococcus marinus (strain ATCC BAA-1437 / JCM 17883 / MC-1), this protein is Sulfate adenylyltransferase subunit 2.